The sequence spans 175 residues: Apoptosis regulator Bcl-2 homolog (175 aa).

The mediates interaction with human NOP53 and localization to host nucleolus stretch occupies residues 37-42; the sequence is KLYITG. Residues 153–173 form a helical membrane-spanning segment; it reads MTALLGSIALLATILAAVAMS.

This sequence belongs to the Bcl-2 family. In terms of assembly, interacts with human NOP53; may sequester ORF16 in host nucleolus and reduce its antiapoptotic activity. Interacts with ORF55.

It localises to the host membrane. The protein resides in the host mitochondrion. It is found in the host nucleus. Its subcellular location is the host nucleolus. Functionally, plays a role in the protection against apoptosis mediated by cytotoxic cells during the immune response to acute and persistent viral infection. Contributes therefore to latency establishment. Also plays a role in the inhibition of host starvation-induced autophagy which ultimately contributes to the viral chronic infection. Also participates in the viral genome replication within host nucleus. The sequence is that of Apoptosis regulator Bcl-2 homolog (vBCL2) from Homo sapiens (Human).